Here is a 232-residue protein sequence, read N- to C-terminus: Large ribosomal subunit protein uL1 (232 aa).

Belongs to the universal ribosomal protein uL1 family. In terms of assembly, part of the 50S ribosomal subunit.

Its function is as follows. Binds directly to 23S rRNA. The L1 stalk is quite mobile in the ribosome, and is involved in E site tRNA release. Functionally, protein L1 is also a translational repressor protein, it controls the translation of the L11 operon by binding to its mRNA. The protein is Large ribosomal subunit protein uL1 of Chlamydia pneumoniae (Chlamydophila pneumoniae).